The following is a 314-amino-acid chain: Ferrochelatase (314 aa).

Fe cation-binding residues include H188 and E269.

Belongs to the ferrochelatase family.

Its subcellular location is the cytoplasm. The catalysed reaction is heme b + 2 H(+) = protoporphyrin IX + Fe(2+). The protein operates within porphyrin-containing compound metabolism; protoheme biosynthesis; protoheme from protoporphyrin-IX: step 1/1. Functionally, catalyzes the ferrous insertion into protoporphyrin IX. This Campylobacter fetus subsp. fetus (strain 82-40) protein is Ferrochelatase.